The primary structure comprises 221 residues: Ras-related protein Rab-27A (221 aa).

Residue serine 2 is modified to N-acetylserine. Serine 2 is subject to Phosphoserine. 16–24 contacts GTP; sequence GDSGVGKTS. Residues 38 to 46 carry the Effector region motif; it reads FITTVGIDF. GTP contacts are provided by residues 74 to 78, 133 to 136, and 163 to 165; these read DTAGQ, NKSD, and SAA. A disulfide bridge connects residues cysteine 123 and cysteine 188. Residues 202–221 are disordered; the sequence is NGHTSADPLNEEKEKGSCGC. The segment covering 211–221 has biased composition (basic and acidic residues); it reads NEEKEKGSCGC. Residues cysteine 219 and cysteine 221 are each lipidated (S-geranylgeranyl cysteine). At cysteine 221 the chain carries Cysteine methyl ester.

It belongs to the small GTPase superfamily. Rab family. In terms of assembly, binds SYTL1, SLAC2B, MYRIP, SYTL3, SYTL4 and SYTL5. Interacts with RPH3A and RPH3A. Binds MLPH and SYTL2. Interacts with UNC13D. Does not interact with the BLOC-3 complex (heterodimer of HPS1 and HPS4). Interacts (GDP-bound form preferentially) with DENND10.

It is found in the membrane. It localises to the melanosome. The protein resides in the late endosome. The protein localises to the lysosome. The catalysed reaction is GTP + H2O = GDP + phosphate + H(+). With respect to regulation, regulated by guanine nucleotide exchange factors (GEFs) which promote the exchange of bound GDP for free GTP, GTPase activating proteins (GAPs) which increase the GTP hydrolysis activity, and GDP dissociation inhibitors which inhibit the dissociation of the nucleotide from the GTPase. Activated by GEFs such as DENND10. Its function is as follows. Small GTPase which cycles between active GTP-bound and inactive GDP-bound states. In its active state, binds to a variety of effector proteins to regulate homeostasis of late endocytic pathway, including endosomal positioning, maturation and secretion. Plays a role in cytotoxic granule exocytosis in lymphocytes. Required for both granule maturation and granule docking and priming at the immunologic synapse. The chain is Ras-related protein Rab-27A (RAB27A) from Sus scrofa (Pig).